The sequence spans 451 residues: D-inositol 3-phosphate glycosyltransferase (451 aa).

1D-myo-inositol 3-phosphate is bound at residue H37. Residues 43–44 (QP) and G51 contribute to the UDP-N-acetyl-alpha-D-glucosamine site. 1D-myo-inositol 3-phosphate-binding positions include 48–53 (DAGGMN), K106, Y138, T162, and R182. UDP-N-acetyl-alpha-D-glucosamine is bound by residues R259, K264, and R323. Residues Y332, R333, and A335 each coordinate Mg(2+). Residues E345 and E353 each contribute to the UDP-N-acetyl-alpha-D-glucosamine site. Residue T359 coordinates Mg(2+).

The protein belongs to the glycosyltransferase group 1 family. MshA subfamily. In terms of assembly, homodimer.

The enzyme catalyses 1D-myo-inositol 3-phosphate + UDP-N-acetyl-alpha-D-glucosamine = 1D-myo-inositol 2-acetamido-2-deoxy-alpha-D-glucopyranoside 3-phosphate + UDP + H(+). Its function is as follows. Catalyzes the transfer of a N-acetyl-glucosamine moiety to 1D-myo-inositol 3-phosphate to produce 1D-myo-inositol 2-acetamido-2-deoxy-glucopyranoside 3-phosphate in the mycothiol biosynthesis pathway. This chain is D-inositol 3-phosphate glycosyltransferase, found in Corynebacterium kroppenstedtii (strain DSM 44385 / JCM 11950 / CIP 105744 / CCUG 35717).